The sequence spans 277 residues: Ribosomal RNA small subunit methyltransferase I (277 aa).

This sequence belongs to the methyltransferase superfamily. RsmI family.

Its subcellular location is the cytoplasm. It catalyses the reaction cytidine(1402) in 16S rRNA + S-adenosyl-L-methionine = 2'-O-methylcytidine(1402) in 16S rRNA + S-adenosyl-L-homocysteine + H(+). In terms of biological role, catalyzes the 2'-O-methylation of the ribose of cytidine 1402 (C1402) in 16S rRNA. In Mycoplasma genitalium (strain ATCC 33530 / DSM 19775 / NCTC 10195 / G37) (Mycoplasmoides genitalium), this protein is Ribosomal RNA small subunit methyltransferase I.